A 193-amino-acid chain; its full sequence is GTP-binding protein rhoA (193 aa).

12-19 (GDGACGKT) contacts GTP. The Effector region motif lies at 34–42 (YVPTVFENY). Residues 59 to 63 (DTAGQ) and 117 to 120 (CKKD) contribute to the GTP site. Cysteine 190 is subject to Cysteine methyl ester. Cysteine 190 is lipidated: S-geranylgeranyl cysteine. A propeptide spans 191-193 (SIL) (removed in mature form).

It belongs to the small GTPase superfamily. Rho family.

It is found in the cell membrane. In terms of biological role, has a role in cell polarity, primary and secondary germ tube emergence and cell wall deposition. This Emericella nidulans (strain FGSC A4 / ATCC 38163 / CBS 112.46 / NRRL 194 / M139) (Aspergillus nidulans) protein is GTP-binding protein rhoA (rhoA).